Reading from the N-terminus, the 393-residue chain is Ethanol acetyltransferase 1 (393 aa).

A mitochondrion-targeting transit peptide spans M1–V25. Residues P49–E151 form the AB hydrolase-1 domain. Active-site charge relay system residues include S122, D146, and H296. A compositionally biased stretch (basic and acidic residues) spans A343 to K354. Residues A343–A393 form a disordered region. The span at V355–T375 shows a compositional bias: polar residues. Basic and acidic residues predominate over residues D379–A393.

Belongs to the AB hydrolase superfamily.

Its subcellular location is the mitochondrion. The catalysed reaction is ethanol + acetyl-CoA = ethyl acetate + CoA. It catalyses the reaction acetyl-CoA + H2O = acetate + CoA + H(+). The enzyme catalyses ethyl acetate + H2O = ethanol + acetate + H(+). Alcohol acetyltransferase that catalyzes the synthesis of ethyl acetate from ethanol and acetyl-CoA. Can also function as a thioesterase by hydrolyzing acetyl-CoA in the absence of ethanol, as well as esterase hydrolyzing ethyl acetate. This chain is Ethanol acetyltransferase 1 (EAT1), found in Wickerhamomyces ciferrii (strain ATCC 14091 / BCRC 22168 / CBS 111 / JCM 3599 / NBRC 0793 / NRRL Y-1031 F-60-10) (Yeast).